We begin with the raw amino-acid sequence, 305 residues long: UDP-3-O-acyl-N-acetylglucosamine deacetylase (305 aa).

H79, H238, and D242 together coordinate Zn(2+). Catalysis depends on H265, which acts as the Proton donor.

This sequence belongs to the LpxC family. Requires Zn(2+) as cofactor.

It carries out the reaction a UDP-3-O-[(3R)-3-hydroxyacyl]-N-acetyl-alpha-D-glucosamine + H2O = a UDP-3-O-[(3R)-3-hydroxyacyl]-alpha-D-glucosamine + acetate. The protein operates within glycolipid biosynthesis; lipid IV(A) biosynthesis; lipid IV(A) from (3R)-3-hydroxytetradecanoyl-[acyl-carrier-protein] and UDP-N-acetyl-alpha-D-glucosamine: step 2/6. Its function is as follows. Catalyzes the hydrolysis of UDP-3-O-myristoyl-N-acetylglucosamine to form UDP-3-O-myristoylglucosamine and acetate, the committed step in lipid A biosynthesis. The sequence is that of UDP-3-O-acyl-N-acetylglucosamine deacetylase from Sodalis glossinidius (strain morsitans).